We begin with the raw amino-acid sequence, 527 residues long: GMP synthase [glutamine-hydrolyzing] (527 aa).

The 199-residue stretch at 11–209 folds into the Glutamine amidotransferase type-1 domain; the sequence is RILILDFGSQ…VLNICGCENL (199 aa). C88 functions as the Nucleophile in the catalytic mechanism. Residues H183 and E185 contribute to the active site. In terms of domain architecture, GMPS ATP-PPase spans 210 to 402; it reads WTSANIIEDA…LGLPYNMLYR (193 aa). ATP is bound at residue 237 to 243; it reads SGGVDSS.

In terms of assembly, homodimer.

It carries out the reaction XMP + L-glutamine + ATP + H2O = GMP + L-glutamate + AMP + diphosphate + 2 H(+). Its pathway is purine metabolism; GMP biosynthesis; GMP from XMP (L-Gln route): step 1/1. Functionally, catalyzes the synthesis of GMP from XMP. In Photobacterium profundum (strain SS9), this protein is GMP synthase [glutamine-hydrolyzing].